The following is a 528-amino-acid chain: MSVVLEDAIRSNAWPFIEAKKILDSLNGKAPEKGYILFETGYGPSGLPHIGTFAENARMVMVQKAFEQLSDIPTKLICFSDDMDGLRKVPSNIPHPEMVAQYMDMPLTSIPDPFGKCKSYGHYMNAKLCAFLDKFGFKYEFYSSTNCYKAGMFDEMLIRVLEKYDEIMALMLPTFRDERKTTYAPFMPICPKTGKVLQVPIEKWDAKAGTVSYKDEDGNDVEVPVTGGHCKLQWKPDFGMRWAALKVDYEMYGKDHLANSRLYSEICRILGGKPPVQFCYELFLDANGEKISKSRGNSISVDDWLKYASVESIALFMYKNPARAKRLFFDLIPKNVDEYITLNQKYHLEEDMVTRFANPVYHIHHGNVPKIETFGLTYSLLLNLTAVCNTSDKSVLWGFITKYEPKATPNTSTYLDHLTEFAIRYYNDFIQTHKSYLVVSEKHKIILHDILDMLSNISDQTEEESIQKAIYDIGMKSGYENLRYYFKDLYQILLGQNEGPRLGTFIKLYGVEETKKLVEEKLLCHTVA.

The 'HIGH' region motif lies at 44-52 (PSGLPHIGT). A 'KMSKS' region motif is present at residues 290-294 (KISKS). Residue K293 coordinates ATP.

It belongs to the class-I aminoacyl-tRNA synthetase family.

Its subcellular location is the cytoplasm. The catalysed reaction is tRNA(Lys) + L-lysine + ATP = L-lysyl-tRNA(Lys) + AMP + diphosphate. The polypeptide is Lysine--tRNA ligase (lysS) (Rickettsia prowazekii (strain Madrid E)).